A 361-amino-acid polypeptide reads, in one-letter code: Peptide chain release factor 1 (361 aa).

At Gln-237 the chain carries N5-methylglutamine. Over residues 283–296 (VEDEKRRSEEESTR) the composition is skewed to basic and acidic residues. Positions 283–305 (VEDEKRRSEEESTRRNLVSSGDR) are disordered.

Belongs to the prokaryotic/mitochondrial release factor family. Methylated by PrmC. Methylation increases the termination efficiency of RF1.

Its subcellular location is the cytoplasm. In terms of biological role, peptide chain release factor 1 directs the termination of translation in response to the peptide chain termination codons UAG and UAA. This chain is Peptide chain release factor 1, found in Shewanella woodyi (strain ATCC 51908 / MS32).